Consider the following 543-residue polypeptide: Light-independent protochlorophyllide reductase subunit B (543 aa).

Position 36 (aspartate 36) interacts with [4Fe-4S] cluster. Aspartate 287 functions as the Proton donor in the catalytic mechanism. Residue 422-423 coordinates substrate; the sequence is GL.

The protein belongs to the ChlB/BchB/BchZ family. In terms of assembly, protochlorophyllide reductase is composed of three subunits; BchL, BchN and BchB. Forms a heterotetramer of two BchB and two BchN subunits. The cofactor is [4Fe-4S] cluster.

The catalysed reaction is chlorophyllide a + oxidized 2[4Fe-4S]-[ferredoxin] + 2 ADP + 2 phosphate = protochlorophyllide a + reduced 2[4Fe-4S]-[ferredoxin] + 2 ATP + 2 H2O. It functions in the pathway porphyrin-containing compound metabolism; bacteriochlorophyll biosynthesis (light-independent). In terms of biological role, component of the dark-operative protochlorophyllide reductase (DPOR) that uses Mg-ATP and reduced ferredoxin to reduce ring D of protochlorophyllide (Pchlide) to form chlorophyllide a (Chlide). This reaction is light-independent. The NB-protein (BchN-BchB) is the catalytic component of the complex. This chain is Light-independent protochlorophyllide reductase subunit B, found in Rubrivivax gelatinosus (strain NBRC 100245 / IL144).